Consider the following 214-residue polypeptide: MTDVVSTEAPALSPLEALGQAIVANSAGAITAWSVAFGELNLLGPANRIVQALTYLRDHPDYRFHQLVDLTGVDYPERERRFDVVYHLLSLIKNHRVRLKVQTDEDTAVPSVTPVFPVADWFEREAFDMYGIFFDGHPDLRRILTDYGFHGHPLRKDFPMTGYVEVRYDDELKRVVYEPVKITEFRAFDFLSPWEGAKYALPGDEKAEKRAGDA.

Belongs to the complex I 30 kDa subunit family. In terms of assembly, NDH-1 is composed of 14 different subunits. Subunits NuoB, C, D, E, F, and G constitute the peripheral sector of the complex.

It localises to the cell inner membrane. The catalysed reaction is a quinone + NADH + 5 H(+)(in) = a quinol + NAD(+) + 4 H(+)(out). NDH-1 shuttles electrons from NADH, via FMN and iron-sulfur (Fe-S) centers, to quinones in the respiratory chain. The immediate electron acceptor for the enzyme in this species is believed to be ubiquinone. Couples the redox reaction to proton translocation (for every two electrons transferred, four hydrogen ions are translocated across the cytoplasmic membrane), and thus conserves the redox energy in a proton gradient. The protein is NADH-quinone oxidoreductase subunit C of Caulobacter sp. (strain K31).